The sequence spans 327 residues: DNA-directed RNA polymerase subunit alpha (327 aa).

The segment at 1–233 is alpha N-terminal domain (alpha-NTD); it reads MVREKVKVST…NLFIPFLHVE (233 aa). The interval 267 to 327 is alpha C-terminal domain (alpha-CTD); sequence LAFQYIFIDQ…KKILDILEKK (61 aa).

Belongs to the RNA polymerase alpha chain family. In terms of assembly, in plastids the minimal PEP RNA polymerase catalytic core is composed of four subunits: alpha, beta, beta', and beta''. When a (nuclear-encoded) sigma factor is associated with the core the holoenzyme is formed, which can initiate transcription.

The protein localises to the plastid. It is found in the chloroplast. The enzyme catalyses RNA(n) + a ribonucleoside 5'-triphosphate = RNA(n+1) + diphosphate. Its function is as follows. DNA-dependent RNA polymerase catalyzes the transcription of DNA into RNA using the four ribonucleoside triphosphates as substrates. The polypeptide is DNA-directed RNA polymerase subunit alpha (Lepidium virginicum (Virginia pepperweed)).